We begin with the raw amino-acid sequence, 451 residues long: Bifunctional protein GlmU (451 aa).

The interval 1–225 (MSLAVVILAA…EFEIQGVNDR (225 aa)) is pyrophosphorylase. UDP-N-acetyl-alpha-D-glucosamine is bound by residues 8–11 (LAAG), K22, Q73, 78–79 (GT), 99–101 (YGD), G135, E150, N165, and N223. Mg(2+) is bound at residue D101. N223 contacts Mg(2+). A linker region spans residues 226–246 (IQLAQLEREWQKHIAEVIMSK). An N-acetyltransferase region spans residues 247–451 (GVSVADPSRI…IDTWQRPVKK (205 aa)). Residues R329 and K347 each coordinate UDP-N-acetyl-alpha-D-glucosamine. Residue H359 is the Proton acceptor of the active site. 2 residues coordinate UDP-N-acetyl-alpha-D-glucosamine: Y362 and N373. Residues A376, 382–383 (NY), S401, A419, and R436 each bind acetyl-CoA.

This sequence in the N-terminal section; belongs to the N-acetylglucosamine-1-phosphate uridyltransferase family. It in the C-terminal section; belongs to the transferase hexapeptide repeat family. In terms of assembly, homotrimer. Mg(2+) serves as cofactor.

It localises to the cytoplasm. It catalyses the reaction alpha-D-glucosamine 1-phosphate + acetyl-CoA = N-acetyl-alpha-D-glucosamine 1-phosphate + CoA + H(+). It carries out the reaction N-acetyl-alpha-D-glucosamine 1-phosphate + UTP + H(+) = UDP-N-acetyl-alpha-D-glucosamine + diphosphate. It functions in the pathway nucleotide-sugar biosynthesis; UDP-N-acetyl-alpha-D-glucosamine biosynthesis; N-acetyl-alpha-D-glucosamine 1-phosphate from alpha-D-glucosamine 6-phosphate (route II): step 2/2. The protein operates within nucleotide-sugar biosynthesis; UDP-N-acetyl-alpha-D-glucosamine biosynthesis; UDP-N-acetyl-alpha-D-glucosamine from N-acetyl-alpha-D-glucosamine 1-phosphate: step 1/1. Its pathway is bacterial outer membrane biogenesis; LPS lipid A biosynthesis. In terms of biological role, catalyzes the last two sequential reactions in the de novo biosynthetic pathway for UDP-N-acetylglucosamine (UDP-GlcNAc). The C-terminal domain catalyzes the transfer of acetyl group from acetyl coenzyme A to glucosamine-1-phosphate (GlcN-1-P) to produce N-acetylglucosamine-1-phosphate (GlcNAc-1-P), which is converted into UDP-GlcNAc by the transfer of uridine 5-monophosphate (from uridine 5-triphosphate), a reaction catalyzed by the N-terminal domain. The polypeptide is Bifunctional protein GlmU (Francisella philomiragia subsp. philomiragia (strain ATCC 25017 / CCUG 19701 / FSC 153 / O#319-036)).